Reading from the N-terminus, the 235-residue chain is Large ribosomal subunit protein uL1 (235 aa).

Belongs to the universal ribosomal protein uL1 family. As to quaternary structure, part of the 50S ribosomal subunit.

In terms of biological role, binds directly to 23S rRNA. The L1 stalk is quite mobile in the ribosome, and is involved in E site tRNA release. Protein L1 is also a translational repressor protein, it controls the translation of the L11 operon by binding to its mRNA. This chain is Large ribosomal subunit protein uL1, found in Parasynechococcus marenigrum (strain WH8102).